Consider the following 1359-residue polypeptide: Junctional cadherin 5-associated protein (1359 aa).

Disordered stretches follow at residues 1-147, 249-411, 454-554, 591-813, 840-1076, 1105-1141, 1157-1207, 1225-1260, and 1276-1359; these read MYSV…SLPV, PLNE…PAHP, NSSP…TCET, SHLP…CNSK, KELQ…TIEI, RAGQNQPAEPDASACTPESPQEELLSRPAPADVPRVS, PLFV…KDVE, SVAGSEKRLRSPSKVIESLQEKLASPPRRADPDRLM, and FRNA…VERV. The segment covering 15 to 28 has biased composition (basic and acidic residues); the sequence is LSRDPPASREDNPK. Composition is skewed to polar residues over residues 82–91 and 98–112; these read PQSTSASRTS and QPPSAWSSHPPTGND. A compositionally biased stretch (basic and acidic residues) spans 120 to 135; that stretch reads RQEARSQKPREHENLE. Positions 302–321 are enriched in low complexity; sequence QQSRGGADSSDSQDSQQMDA. Pro residues predominate over residues 335-353; sequence LEPPVYVPPPSYRSPPQNI. Residues 539–554 are compositionally biased toward polar residues; that stretch reads RQVSSPYSQGESTCET. The segment covering 591–613 has biased composition (basic and acidic residues); it reads SHLPDRDMDNNDLKPSADQKNGS. Polar residues-rich tracts occupy residues 619 to 632, 689 to 704, and 756 to 773; these read LQEQSLLSMSSTDL, QQTQTSFSEEPQSSQL, and LSPSSNSAFSRTSLSVDQ. Low complexity predominate over residues 849 to 859; it reads SSSSSSSSSSS. Positions 868–880 are enriched in basic and acidic residues; it reads QENRAHCRQEDVG. The span at 1003–1013 shows a compositional bias: polar residues; that stretch reads PKITSAFSSVK. Phosphoserine is present on residues Ser1044 and Ser1050. Ser1194 is subject to Phosphoserine. At Ser1281 the chain carries Phosphoserine. Positions 1324–1342 are enriched in basic and acidic residues; it reads SISREEKEHPAAQKEKSMD.

The protein localises to the cell junction. Its subcellular location is the adherens junction. The protein is Junctional cadherin 5-associated protein of Homo sapiens (Human).